We begin with the raw amino-acid sequence, 109 residues long: Flagellar hook-basal body complex protein FliE (109 aa).

Belongs to the FliE family.

The protein resides in the bacterial flagellum basal body. The polypeptide is Flagellar hook-basal body complex protein FliE (Pseudomonas fluorescens (strain Pf0-1)).